The sequence spans 417 residues: Serine hydroxymethyltransferase (417 aa).

(6S)-5,6,7,8-tetrahydrofolate is bound by residues Leu-121 and Gly-125–Leu-127. At Lys-229 the chain carries N6-(pyridoxal phosphate)lysine. Ser-355–Phe-357 serves as a coordination point for (6S)-5,6,7,8-tetrahydrofolate.

It belongs to the SHMT family. As to quaternary structure, homodimer. Requires pyridoxal 5'-phosphate as cofactor.

The protein localises to the cytoplasm. It catalyses the reaction (6R)-5,10-methylene-5,6,7,8-tetrahydrofolate + glycine + H2O = (6S)-5,6,7,8-tetrahydrofolate + L-serine. It functions in the pathway one-carbon metabolism; tetrahydrofolate interconversion. The protein operates within amino-acid biosynthesis; glycine biosynthesis; glycine from L-serine: step 1/1. In terms of biological role, catalyzes the reversible interconversion of serine and glycine with tetrahydrofolate (THF) serving as the one-carbon carrier. This reaction serves as the major source of one-carbon groups required for the biosynthesis of purines, thymidylate, methionine, and other important biomolecules. Also exhibits THF-independent aldolase activity toward beta-hydroxyamino acids, producing glycine and aldehydes, via a retro-aldol mechanism. The polypeptide is Serine hydroxymethyltransferase (Serratia proteamaculans (strain 568)).